Reading from the N-terminus, the 74-residue chain is Protein WFDC9 (74 aa).

An N-terminal signal peptide occupies residues 1 to 19; sequence MKFWILLLTVSAHGIVVFL.

The protein localises to the secreted. The chain is Protein WFDC9 (Wfdc9) from Rattus norvegicus (Rat).